A 637-amino-acid chain; its full sequence is Extracellular metalloproteinase MEP (637 aa).

A signal peptide spans 1 to 21; the sequence is MRSVDSLLLLGLTGLASQANA. A propeptide spanning residues 22-246 is cleaved from the precursor; that stretch reads HPAKRQPNDS…VVGVVDYVAD (225 aa). N288 is a glycosylation site (N-linked (GlcNAc...) asparagine). H431 is a binding site for Zn(2+). E432 is a catalytic residue. H435 is a binding site for Zn(2+).

It belongs to the peptidase M36 family. Zn(2+) serves as cofactor.

It localises to the secreted. Its function is as follows. Secreted metalloproteinase that probably acts as a virulence factor. Cleaves Z.mays Endochitinase A (CHIA) between residues 'Gly-29' and 'Cys-30'. In Fusarium vanettenii (strain ATCC MYA-4622 / CBS 123669 / FGSC 9596 / NRRL 45880 / 77-13-4) (Fusarium solani subsp. pisi), this protein is Extracellular metalloproteinase MEP (MEP).